The primary structure comprises 117 residues: Large ribosomal subunit protein uL18 (117 aa).

Belongs to the universal ribosomal protein uL18 family. As to quaternary structure, part of the 50S ribosomal subunit; part of the 5S rRNA/L5/L18/L25 subcomplex. Contacts the 5S and 23S rRNAs.

Its function is as follows. This is one of the proteins that bind and probably mediate the attachment of the 5S RNA into the large ribosomal subunit, where it forms part of the central protuberance. This Proteus mirabilis (strain HI4320) protein is Large ribosomal subunit protein uL18.